Reading from the N-terminus, the 404-residue chain is Cysteine desulfurase IscS (404 aa).

Pyridoxal 5'-phosphate contacts are provided by residues 75–76, Asn-155, Gln-183, and 203–205; these read AT and SGH. Lys-206 is subject to N6-(pyridoxal phosphate)lysine. Pyridoxal 5'-phosphate is bound at residue Thr-243. The active-site Cysteine persulfide intermediate is the Cys-328. A [2Fe-2S] cluster-binding site is contributed by Cys-328.

This sequence belongs to the class-V pyridoxal-phosphate-dependent aminotransferase family. NifS/IscS subfamily. Homodimer. Forms a heterotetramer with IscU, interacts with other sulfur acceptors. Pyridoxal 5'-phosphate serves as cofactor.

It is found in the cytoplasm. It catalyses the reaction (sulfur carrier)-H + L-cysteine = (sulfur carrier)-SH + L-alanine. Its pathway is cofactor biosynthesis; iron-sulfur cluster biosynthesis. Master enzyme that delivers sulfur to a number of partners involved in Fe-S cluster assembly, tRNA modification or cofactor biosynthesis. Catalyzes the removal of elemental sulfur atoms from cysteine to produce alanine. Functions as a sulfur delivery protein for Fe-S cluster synthesis onto IscU, an Fe-S scaffold assembly protein, as well as other S acceptor proteins. This Edwardsiella ictaluri (strain 93-146) protein is Cysteine desulfurase IscS.